Reading from the N-terminus, the 190-residue chain is GATA transcription factor 17 (190 aa).

A compositionally biased stretch (basic and acidic residues) spans 1-14; it reads MSEGSEDTKTKLDS. 2 disordered regions span residues 1–42 and 77–101; these read MSEG…DTKR and RQAA…NDLN. A GATA-type zinc finger spans residues 38-92; sequence GDTKRTCVDCGTIRTPLWRGGPAGPKSLCNACGIKSRKKRQAALGMRSEEKKKNR.

It belongs to the type IV zinc-finger family. Class B subfamily.

The protein resides in the nucleus. Functionally, transcriptional regulator that specifically binds 5'-GATA-3' or 5'-GAT-3' motifs within gene promoters. The chain is GATA transcription factor 17 (GATA17) from Arabidopsis thaliana (Mouse-ear cress).